Consider the following 286-residue polypeptide: Uridylate cyclase (286 aa).

The 134-residue stretch at 90–223 (TAIFVDIRKS…DAVTKAANMS (134 aa)) folds into the Guanylate cyclase domain. Phe-93 lines the a ribonucleoside 5'-triphosphate pocket. Mn(2+) is bound by residues Asp-95, Ile-96, and Asp-140.

It belongs to the adenylyl cyclase class-4/guanylyl cyclase family. Pyrimidine cyclase subfamily. As to quaternary structure, homodimer. Requires Mn(2+) as cofactor.

Its subcellular location is the cytoplasm. It carries out the reaction UTP = 3',5'-cyclic UMP + diphosphate. Pycsar (pyrimidine cyclase system for antiphage resistance) provides immunity against bacteriophage. The pyrimidine cyclase (PycC) synthesizes cyclic nucleotides in response to infection; these serve as specific second messenger signals. The signals activate the adjacent effector, leading to bacterial cell death and abortive phage infection. A clade C Pycsar system. Functionally, the pyrimidine cyclase gene of a two-gene Pycsar system, weakly generates cyclic UMP (cUMP) from UTP, has little to no activity on ATP, CTP or GTP. Expression of this and adjacent effector TpPycTM (AC A0A1T4LJG1) probably confers resistance to bacteriophage. The genes are probably only expressed in response to bacteriophage infection. The protein is Uridylate cyclase of Treponema porcinum.